The following is a 173-amino-acid chain: Histone deacetylase complex subunit SAP30 homolog (173 aa).

An Atypical zinc finger spans residues 21–69 (CCLLDDGDRCRNQAGNASYSKRIQKTVTQRRLKLSIDTAARHIYICDFH).

Belongs to the SAP30 family. As to quaternary structure, component of the class 1 Sin3-histone deacetylase complex (HDAC).

It localises to the nucleus. In terms of biological role, required for the function of the class 1 Sin3-histone deacetylase complex (HDAC). The protein is Histone deacetylase complex subunit SAP30 homolog of Aedes aegypti (Yellowfever mosquito).